A 3564-amino-acid chain; its full sequence is CUB and sushi domain-containing protein 1 (3564 aa).

Positions 1 to 26 (MTAWRRFQSLLLLLGLLVLCARLLTA) are cleaved as a signal peptide. Residues 27-3487 (AKGQNCGGLV…SHYHGTSSGS (3461 aa)) are Extracellular-facing. 10 cysteine pairs are disulfide-bonded: C32/C58, C145/C185, C171/C202, C208/C234, C349/C389, C375/C406, C411/C437, C527/C567, C553/C580, and C584/C610. The CUB 1 domain maps to 32 to 140 (CGGLVQGPNG…QGFKALYEVL (109 aa)). Residues N40 and N57 are each glycosylated (N-linked (GlcNAc...) asparagine). Residues 143-204 (HTCGNPGEIL…WDFPAPFCRA (62 aa)) form the Sushi 1 domain. Residues 208 to 312 (CGGTLRGTSS…KGFNAQFQVK (105 aa)) enclose the CUB 2 domain. One can recognise a Sushi 2 domain in the interval 347–408 (DMCPDPGIPE…WSDHRPICRA (62 aa)). Residues 411-522 (CGSNLRGPSG…PGFKAVYQEI (112 aa)) form the CUB 3 domain. A Sushi 3 domain is found at 525–582 (GGCGDPGIPAYGKRTGSSFLHGDTLTFECPAAFELVGERVITCQQNNQWSGNKPSCVF). Positions 584 to 692 (CFFNFTASSG…RGFNITYTTF (109 aa)) constitute a CUB 4 domain. N587 and N686 each carry an N-linked (GlcNAc...) asparagine glycan. One can recognise a Sushi 4 domain in the interval 695–756 (NECHDPGIPI…WSSTVPRCEA (62 aa)). 6 disulfides stabilise this stretch: C697-C738, C723-C754, C758-C784, C873-C913, C899-C926, and C930-C956. The region spanning 758 to 866 (CGGHLTASSG…IGFLIHYESV (109 aa)) is the CUB 5 domain. The Sushi 5 domain maps to 871–928 (DSCLDPGIPVNGHRHGGDFGIRSTVTFSCDPGYTLSDDEPLVCERNHQWNHALPSCDA). In terms of domain architecture, CUB 6 spans 930 to 1040 (CGGYIQGKSG…EGFNITFSEY (111 aa)). N-linked (GlcNAc...) asparagine glycosylation is found at N955, N1015, and N1034. Residues 1043–1102 (EPCDDPGVPAFSRRIGFHFGVGDSLTFSCFLGYRLEGATKLTCLGGGRRVWSAPLPRCVA) enclose the Sushi 6 domain. 3 disulfide bridges follow: C1045–C1085, C1071–C1100, and C1104–C1130. The 109-residue stretch at 1104 to 1212 (CGASVKGNEG…QGFQLTYTSF (109 aa)) folds into the CUB 7 domain. 2 N-linked (GlcNAc...) asparagine glycosylation sites follow: N1184 and N1197. A Sushi 7 domain is found at 1215–1275 (VKCEDPGIPN…WDKPLPSCIA (61 aa)). Disulfide bonds link C1217-C1258, C1244-C1273, C1277-C1304, C1391-C1431, C1417-C1447, C1451-C1477, C1564-C1604, C1590-C1621, C1625-C1651, C1741-C1781, C1767-C1798, and C1802-C1828. In terms of domain architecture, CUB 8 spans 1277–1386 (CGGQIHAATS…SGFSIQFSTS (110 aa)). One can recognise a Sushi 8 domain in the interval 1389-1449 (ATCNDPGMPQ…WQPDPPTCIA (61 aa)). N-linked (GlcNAc...) asparagine glycosylation occurs at N1399. One can recognise a CUB 9 domain in the interval 1451 to 1559 (CGGNLTGPAG…SGFAIEFKEK (109 aa)). N-linked (GlcNAc...) asparagine glycosylation is found at N1454 and N1572. The 62-residue stretch at 1562–1623 (EACFDPGNIM…WDQVLPSCNA (62 aa)) folds into the Sushi 9 domain. The region spanning 1625 to 1733 (CGGQYTGSEG…RGFHFVYQAV (109 aa)) is the CUB 10 domain. Residue N1644 is glycosylated (N-linked (GlcNAc...) asparagine). One can recognise a Sushi 10 domain in the interval 1739–1800 (TQCSSVPEPR…WNDTIPSCVV (62 aa)). N-linked (GlcNAc...) asparagine glycosylation is found at N1792, N1805, and N1882. Positions 1802–1910 (CSGNFTQRRG…AGFHLEYKTV (109 aa)) constitute a CUB 11 domain. The Sushi 11 domain occupies 1913 to 1972 (AACQEPALPSNSIKIGDRYMVNDVLSFQCEPGYTLQGRSHISCMPGTVRRWNYPSPLCIA). Cystine bridges form between C1915–C1955, C1941–C1970, and C1974–C2000. Residues 1974-2082 (CGGTLSTLGG…QGFKLAYQAY (109 aa)) enclose the CUB 12 domain. N2018 carries N-linked (GlcNAc...) asparagine glycosylation. The Sushi 12 domain maps to 2085-2144 (QNCPDPPPFQNGYMINSDYSVGQSVSFECYPGYILIGHPVLTCQHGINRNWNYPFPRCDA). 3 disulfides stabilise this stretch: C2087/C2127, C2113/C2142, and C2146/C2172. One can recognise a CUB 13 domain in the interval 2146–2257 (CGYNVTSQNG…LNFHAFQLKK (112 aa)). N2149, N2154, and N2187 each carry an N-linked (GlcNAc...) asparagine glycan. Residues 2256-2317 (KKCQPPPAVP…FEGSLPTCEA (62 aa)) enclose the Sushi 13 domain. Intrachain disulfides connect C2258–C2300, C2286–C2315, and C2319–C2347. Residues 2319 to 2430 (CPANEVRTGS…KGFKIRYAAP (112 aa)) enclose the CUB 14 domain. N-linked (GlcNAc...) asparagine glycosylation is found at N2358, N2394, N2400, N2445, N2470, and N2503. Sushi domains lie at 2430 to 2492 (PYCS…LCQA), 2493 to 2554 (VSCG…TCKP), 2555 to 2619 (VACP…SCRV), 2620 to 2677 (ISCG…RCLA), 2678 to 2735 (GHCG…VCVP), 2736 to 2793 (ITCG…TCRV), 2794 to 2856 (VNCS…KCLA), 2857 to 2914 (ISCG…HCTG), 2918 to 2975 (GFCG…VCEA), 2976 to 3034 (VSCG…DCTI), 3035 to 3094 (ISCG…VCKA), 3095 to 3152 (VLCP…QCLP), 3153 to 3210 (VFCG…TCID), 3214 to 3272 (NTCP…ECIP), and 3273 to 3332 (HACR…VCKS). 12 disulfide bridges follow: C2432/C2473, C2459/C2490, C2495/C2537, C2521/C2552, C2557/C2602, C2588/C2617, C2622/C2662, C2648/C2675, C2680/C2720, C2706/C2733, C2738/C2778, and C2764/C2791. N-linked (GlcNAc...) asparagine glycosylation is present at N2605. 2 N-linked (GlcNAc...) asparagine glycosylation sites follow: N2750 and N2761. N-linked (GlcNAc...) asparagine glycosylation is present at N2795. 18 disulfides stabilise this stretch: C2796-C2841, C2827-C2854, C2859-C2899, C2885-C2912, C2920-C2960, C2946-C2973, C2978-C3019, C3005-C3032, C3037-C3079, C3063-C3092, C3097-C3137, C3123-C3150, C3155-C3195, C3181-C3208, C3216-C3257, C3243-C3270, C3275-C3317, and C3302-C3330. N2894 carries N-linked (GlcNAc...) asparagine glycosylation. N2963 carries N-linked (GlcNAc...) asparagine glycosylation. N3022 and N3056 each carry an N-linked (GlcNAc...) asparagine glycan. Residue N3105 is glycosylated (N-linked (GlcNAc...) asparagine). N-linked (GlcNAc...) asparagine glycosylation is found at N3228 and N3260. Residues N3339, N3379, and N3386 are each glycosylated (N-linked (GlcNAc...) asparagine). Residues 3488–3508 (VAAAILVPFFALILSGFAFYL) form a helical membrane-spanning segment. Over 3509 to 3564 (YKHRTRPKVQYNGYAGHENSNGQASFENPMYDTNLKPTEAKAVRFDTTLNTVCTVV) the chain is Cytoplasmic.

Belongs to the CSMD family. In terms of tissue distribution, weakly expressed in most tissues, except in brain. Expressed at intermediate level in brain, including cerebellum, substantia nigra, hippocampus and fetal brain.

The protein resides in the membrane. In terms of biological role, potential suppressor of squamous cell carcinomas. The polypeptide is CUB and sushi domain-containing protein 1 (CSMD1) (Homo sapiens (Human)).